A 287-amino-acid chain; its full sequence is Bifunctional protein FolD (287 aa).

Residues 169-171 (GRS) and serine 194 each bind NADP(+).

The protein belongs to the tetrahydrofolate dehydrogenase/cyclohydrolase family. Homodimer.

It carries out the reaction (6R)-5,10-methylene-5,6,7,8-tetrahydrofolate + NADP(+) = (6R)-5,10-methenyltetrahydrofolate + NADPH. The enzyme catalyses (6R)-5,10-methenyltetrahydrofolate + H2O = (6R)-10-formyltetrahydrofolate + H(+). Its pathway is one-carbon metabolism; tetrahydrofolate interconversion. Its function is as follows. Catalyzes the oxidation of 5,10-methylenetetrahydrofolate to 5,10-methenyltetrahydrofolate and then the hydrolysis of 5,10-methenyltetrahydrofolate to 10-formyltetrahydrofolate. The polypeptide is Bifunctional protein FolD (Albidiferax ferrireducens (strain ATCC BAA-621 / DSM 15236 / T118) (Rhodoferax ferrireducens)).